The primary structure comprises 109 residues: Protein reprimo (109 aa).

Residues asparagine 7 and asparagine 18 are each glycosylated (N-linked (GlcNAc...) asparagine). A helical transmembrane segment spans residues valine 56–leucine 76. Serine 98 carries the phosphoserine modification.

The protein belongs to the reprimo family.

The protein localises to the cytoplasm. Its subcellular location is the membrane. May be involved in the regulation of p53-dependent G2 arrest of the cell cycle. Seems to induce cell cycle arrest by inhibiting CDK1 activity and nuclear translocation of the CDC2 cyclin B1 complex. This is Protein reprimo (Rprm) from Mus musculus (Mouse).